The following is a 156-amino-acid chain: Small ribosomal subunit protein uS7 (156 aa).

Belongs to the universal ribosomal protein uS7 family. In terms of assembly, part of the 30S ribosomal subunit. Contacts proteins S9 and S11.

One of the primary rRNA binding proteins, it binds directly to 16S rRNA where it nucleates assembly of the head domain of the 30S subunit. Is located at the subunit interface close to the decoding center, probably blocks exit of the E-site tRNA. This Alcanivorax borkumensis (strain ATCC 700651 / DSM 11573 / NCIMB 13689 / SK2) protein is Small ribosomal subunit protein uS7.